Here is a 308-residue protein sequence, read N- to C-terminus: Testis-specific Y-encoded protein 8 (308 aa).

Belongs to the nucleosome assembly protein (NAP) family.

The protein localises to the cytoplasm. The protein resides in the nucleus. May be involved in sperm differentiation and proliferation. This chain is Testis-specific Y-encoded protein 8 (TSPY8), found in Homo sapiens (Human).